Here is a 222-residue protein sequence, read N- to C-terminus: Probable fructose-6-phosphate aldolase (222 aa).

Catalysis depends on Lys87, which acts as the Schiff-base intermediate with substrate.

The protein belongs to the transaldolase family. Type 3A subfamily.

The protein localises to the cytoplasm. It carries out the reaction beta-D-fructose 6-phosphate = dihydroxyacetone + D-glyceraldehyde 3-phosphate. In terms of biological role, catalyzes the reversible formation of fructose 6-phosphate from dihydroxyacetone and D-glyceraldehyde 3-phosphate via an aldolization reaction. The sequence is that of Probable fructose-6-phosphate aldolase from Streptococcus pneumoniae (strain ATCC 700669 / Spain 23F-1).